Here is a 378-residue protein sequence, read N- to C-terminus: 3-dehydroquinate synthase (378 aa).

NAD(+)-binding positions include 115–119 (GVVGD), 139–140 (TS), Lys-152, and Lys-161. 3 residues coordinate Zn(2+): Glu-194, His-256, and His-275.

The protein belongs to the sugar phosphate cyclases superfamily. Dehydroquinate synthase family. Co(2+) is required as a cofactor. Zn(2+) serves as cofactor. It depends on NAD(+) as a cofactor.

It localises to the cytoplasm. The catalysed reaction is 7-phospho-2-dehydro-3-deoxy-D-arabino-heptonate = 3-dehydroquinate + phosphate. It participates in metabolic intermediate biosynthesis; chorismate biosynthesis; chorismate from D-erythrose 4-phosphate and phosphoenolpyruvate: step 2/7. Catalyzes the conversion of 3-deoxy-D-arabino-heptulosonate 7-phosphate (DAHP) to dehydroquinate (DHQ). The sequence is that of 3-dehydroquinate synthase from Brucella suis (strain ATCC 23445 / NCTC 10510).